The sequence spans 433 residues: Glutamate-1-semialdehyde 2,1-aminomutase (433 aa).

Lysine 271 carries the N6-(pyridoxal phosphate)lysine modification.

Belongs to the class-III pyridoxal-phosphate-dependent aminotransferase family. HemL subfamily. As to quaternary structure, homodimer. The cofactor is pyridoxal 5'-phosphate.

It is found in the cytoplasm. The enzyme catalyses (S)-4-amino-5-oxopentanoate = 5-aminolevulinate. It functions in the pathway porphyrin-containing compound metabolism; protoporphyrin-IX biosynthesis; 5-aminolevulinate from L-glutamyl-tRNA(Glu): step 2/2. It participates in porphyrin-containing compound metabolism; chlorophyll biosynthesis. This chain is Glutamate-1-semialdehyde 2,1-aminomutase, found in Prochlorococcus marinus (strain MIT 9301).